Consider the following 454-residue polypeptide: tRNA modification GTPase MnmE (454 aa).

(6S)-5-formyl-5,6,7,8-tetrahydrofolate-binding residues include Arg23, Glu80, and Lys120. The region spanning 216–377 (GMKVVIAGRP…LRDHLKQSMG (162 aa)) is the TrmE-type G domain. A K(+)-binding site is contributed by Asn226. GTP contacts are provided by residues 226-231 (NAGKSS), 245-251 (TDIAGTT), 270-273 (DTAG), 335-338 (NKAD), and 358-360 (SAR). Ser230 contributes to the Mg(2+) binding site. 3 residues coordinate K(+): Thr245, Ile247, and Thr250. A Mg(2+)-binding site is contributed by Thr251. Lys454 contributes to the (6S)-5-formyl-5,6,7,8-tetrahydrofolate binding site.

It belongs to the TRAFAC class TrmE-Era-EngA-EngB-Septin-like GTPase superfamily. TrmE GTPase family. Homodimer. Heterotetramer of two MnmE and two MnmG subunits. The cofactor is K(+).

It localises to the cytoplasm. Exhibits a very high intrinsic GTPase hydrolysis rate. Involved in the addition of a carboxymethylaminomethyl (cmnm) group at the wobble position (U34) of certain tRNAs, forming tRNA-cmnm(5)s(2)U34. This Yersinia pestis bv. Antiqua (strain Antiqua) protein is tRNA modification GTPase MnmE.